A 163-amino-acid chain; its full sequence is Nucleotide-binding protein BBR47_25280 (163 aa).

The protein belongs to the YajQ family.

Functionally, nucleotide-binding protein. This chain is Nucleotide-binding protein BBR47_25280, found in Brevibacillus brevis (strain 47 / JCM 6285 / NBRC 100599).